A 483-amino-acid polypeptide reads, in one-letter code: NADH-quinone oxidoreductase subunit N (483 aa).

13 consecutive transmembrane segments (helical) span residues 13-33 (PALPEILLAVGAMALLMYGVF), 45-65 (GALALFALVGAFLIIEPNAYV), 80-100 (FMKLLILLAAAAAIVMSLTFI), 111-131 (PVLIILATLGMFMMVSANGLI), 165-185 (FVLGALASGMLLYGASLIYGF), 205-225 (IGVIFGIVFVLAGLAFKISAV), 244-264 (AFFAGAPKVAAMALILRVLFV), 276-296 (IIVFIAIASMVLGAFAAIGQS), 301-321 (LMAYSSISHMGFAMVGLAAGT), 328-348 (VLIYLVIYVVMNAGVFCCILA), 373-393 (AFMMAMLMFSLAGVPPLAGFF), 407-429 (LYPLAVIGVLASVVGAFYYLRIV), and 452-472 (VLGISGVFTLFFFVYPAPLIL).

Belongs to the complex I subunit 2 family. In terms of assembly, NDH-1 is composed of 14 different subunits. Subunits NuoA, H, J, K, L, M, N constitute the membrane sector of the complex.

Its subcellular location is the cell inner membrane. It catalyses the reaction a quinone + NADH + 5 H(+)(in) = a quinol + NAD(+) + 4 H(+)(out). In terms of biological role, NDH-1 shuttles electrons from NADH, via FMN and iron-sulfur (Fe-S) centers, to quinones in the respiratory chain. The immediate electron acceptor for the enzyme in this species is believed to be ubiquinone. Couples the redox reaction to proton translocation (for every two electrons transferred, four hydrogen ions are translocated across the cytoplasmic membrane), and thus conserves the redox energy in a proton gradient. The sequence is that of NADH-quinone oxidoreductase subunit N from Parvibaculum lavamentivorans (strain DS-1 / DSM 13023 / NCIMB 13966).